Consider the following 63-residue polypeptide: Large ribosomal subunit protein uL29 (63 aa).

The protein belongs to the universal ribosomal protein uL29 family.

This chain is Large ribosomal subunit protein uL29, found in Histophilus somni (strain 129Pt) (Haemophilus somnus).